The chain runs to 433 residues: MAITDYCECRFTAGNGGNGIIAWKREAHYDKGGPGGGNGGNGGNVILQADHNCDSLFFLKNKKHLFAEDGQNGKPDLAHGKNGSDLLIKVPIGTTVKNLENNSVLVDFVHDKQSFILCFGGKGGKGNAAFKSPIMRAPNLYENGDKGEILNVSLEVKYLANVGIVGFPNSGKSTLISKLSNAKPKIANYRFTTLIPVLGVVKYQNNSLVFADIPGLIENASEGSGLGHDFLRHIERCEILIHLISLDPVDNDDPCKAYLQIMDELSKYSPLLVKKKMLVVANKIDVNEGEKRFKKLEKFLQKKSISVLKISALKKELGNLLDRVFELYNKTISQFGANKFSLPMELEKHYVFQNTNENNNDPLNIEKDSLNRWIVNCKRLRYWFDKIPQTTLDNIRRLGNKIKEIGIEDQLKSVGAKKGDIIFFDGCEFVIND.

Residues Met1–Leu159 form the Obg domain. The OBG-type G domain occupies Ala160 to Asn329. GTP contacts are provided by residues Gly166–Ser173, Phe191–Ile195, Asp212–Gly215, Asn282–Asp285, and Ile310–Ala312. Mg(2+) contacts are provided by Ser173 and Thr193. The 79-residue stretch at Thr355–Asp433 folds into the OCT domain.

It belongs to the TRAFAC class OBG-HflX-like GTPase superfamily. OBG GTPase family. Monomer. The cofactor is Mg(2+).

It is found in the cytoplasm. Functionally, an essential GTPase which binds GTP, GDP and possibly (p)ppGpp with moderate affinity, with high nucleotide exchange rates and a fairly low GTP hydrolysis rate. Plays a role in control of the cell cycle, stress response, ribosome biogenesis and in those bacteria that undergo differentiation, in morphogenesis control. This is GTPase Obg from Mycoplasma genitalium (strain ATCC 33530 / DSM 19775 / NCTC 10195 / G37) (Mycoplasmoides genitalium).